The primary structure comprises 503 residues: Potassium voltage-gated channel subfamily V member 1 (503 aa).

2 disordered regions span residues 1 to 20 and 171 to 192; these read MDLS…DSGS and KKDT…KGPC. Residues 3 to 213 are Cytoplasmic-facing; the sequence is LSPRNRPLLD…EKPGSSTAAR (211 aa). The segment covering 10–20 has biased composition (low complexity); the sequence is LLDSSSLDSGS. A compositionally biased stretch (basic and acidic residues) spans 171 to 187; it reads KKDTDDQESQHESEQDF. The chain crosses the membrane as a helical span at residues 214–234; it reads IFGVISIIFVAVSIVNMALMS. Over 235–241 the chain is Extracellular; it reads AELSWLN. A helical transmembrane segment spans residues 242-262; it reads LQLLEILEYVCISWFTGEFVL. Topologically, residues 263-279 are cytoplasmic; sequence RFLCVKDRCHFLRKVPN. Residues 280–300 form a helical membrane-spanning segment; sequence IIDLLAILPFYITLLVESLSG. At 301 to 312 the chain is on the extracellular side; sequence SHTTQELENVGR. Residues 313 to 334 form a helical; Voltage-sensor membrane-spanning segment; sequence LVQVLRLLRALRMLKLGRHSTG. At 335-348 the chain is on the cytoplasmic side; the sequence is LRSLGMTITQCYEE. The chain crosses the membrane as a helical span at residues 349 to 369; that stretch reads VGLLLLFLSVGISIFSTIEYF. The Selectivity filter signature appears at 395–400; it reads TVGYGD. The helical transmembrane segment at 410–430 threads the bilayer; that stretch reads IVAFMCILSGILVLALPIAII. Topologically, residues 431 to 503 are cytoplasmic; sequence NDRFSACYFT…RSSGGDDFWF (73 aa).

This sequence belongs to the potassium channel family. V (TC 1.A.1.2) subfamily. Kv8.1/KCNV1 sub-subfamily. As to quaternary structure, heteromultimer with KCNB1 and KCNB2. Interacts with KCNC4 and KCND1.

The protein localises to the cell membrane. In terms of biological role, potassium channel subunit that does not form functional channels by itself. Modulates KCNB1 and KCNB2 channel activity by shifting the threshold for inactivation to more negative values and by slowing the rate of inactivation. Can down-regulate the channel activity of KCNB1, KCNB2, KCNC4 and KCND1, possibly by trapping them in intracellular membranes. The chain is Potassium voltage-gated channel subfamily V member 1 (Kcnv1) from Mus musculus (Mouse).